The primary structure comprises 330 residues: MKDKAYDITIIGGGPIGLFAAFYAGLRGVTVKIIESLSELGGQPAILYPEKMIYDIPAYPSLTGVELTENLIKQLSRFEDRTTICLKEEVLTFDKVKGGFSIRTNKAEHFSKAIIIACGNGAFAPRTLGLESEENFADHNLFYNVHQLDQFAGQKVVICGGGDSAVDWALALEDIAESVTVVHRRDAFRAHEHSVELLKTSTVNLLTPYVPKALKGIGNLAEKLVIQKVKEDEVLELELDSLIVSFGFSTSNKNLKNWNLDYKRSSITVSPLFQTSQEGIFAIGDAAAYNGKVDLIATGFGEAPTAVNQAINYIYPDRDNRVVHSTSLID.

FAD contacts are provided by glutamate 35, glutamine 43, tyrosine 48, valine 90, phenylalanine 123, aspartate 285, and threonine 326.

Belongs to the ferredoxin--NADP reductase type 2 family. In terms of assembly, homodimer. FAD is required as a cofactor.

The enzyme catalyses 2 reduced [2Fe-2S]-[ferredoxin] + NADP(+) + H(+) = 2 oxidized [2Fe-2S]-[ferredoxin] + NADPH. The sequence is that of Ferredoxin--NADP reductase from Streptococcus pyogenes serotype M6 (strain ATCC BAA-946 / MGAS10394).